The chain runs to 352 residues: Photosystem II D2 protein (352 aa).

A helical transmembrane segment spans residues 40–60 (TAYLALGGWLTGTTFVTSWYT). His117 provides a ligand contact to chlorophyll a. Residues 124-140 (GFMLRQFEIARLVGIRP) traverse the membrane as a helical segment. 2 residues coordinate pheophytin a: Gln129 and Asn142. Residues 152–165 (VFVSVFLIYPLGQS) traverse the membrane as a helical segment. Residue His197 coordinates chlorophyll a. Residues 207-227 (GALLCAIHGATVENTLFEDGE) traverse the membrane as a helical segment. Residues His214 and Phe261 each coordinate a plastoquinone. Fe cation is bound at residue His214. Fe cation is bound at residue His268. A helical transmembrane segment spans residues 278-294 (GLWTSSIGIIGLALNLR).

This sequence belongs to the reaction center PufL/M/PsbA/D family. As to quaternary structure, PSII is composed of 1 copy each of membrane proteins PsbA, PsbB, PsbC, PsbD, PsbE, PsbF, PsbH, PsbI, PsbJ, PsbK, PsbL, PsbM, PsbT, PsbX, PsbY, PsbZ, Psb30/Ycf12, at least 3 peripheral proteins of the oxygen-evolving complex and a large number of cofactors. It forms dimeric complexes. The D1/D2 heterodimer binds P680, chlorophylls that are the primary electron donor of PSII, and subsequent electron acceptors. It shares a non-heme iron and each subunit binds pheophytin, quinone, additional chlorophylls, carotenoids and lipids. There is also a Cl(-1) ion associated with D1 and D2, which is required for oxygen evolution. The PSII complex binds additional chlorophylls, carotenoids and specific lipids. is required as a cofactor.

The protein localises to the plastid. The protein resides in the organellar chromatophore thylakoid membrane. It carries out the reaction 2 a plastoquinone + 4 hnu + 2 H2O = 2 a plastoquinol + O2. In terms of biological role, photosystem II (PSII) is a light-driven water:plastoquinone oxidoreductase that uses light energy to abstract electrons from H(2)O, generating O(2) and a proton gradient subsequently used for ATP formation. It consists of a core antenna complex that captures photons, and an electron transfer chain that converts photonic excitation into a charge separation. The D1/D2 (PsbA/PsbD) reaction center heterodimer binds P680, the primary electron donor of PSII as well as several subsequent electron acceptors. D2 is needed for assembly of a stable PSII complex. The protein is Photosystem II D2 protein of Paulinella chromatophora.